The primary structure comprises 91 residues: Acylphosphatase (91 aa).

The 88-residue stretch at 3–90 (QYRIIVDGRV…EGHHRFSIVY (88 aa)) folds into the Acylphosphatase-like domain. Active-site residues include arginine 18 and asparagine 36.

Belongs to the acylphosphatase family.

It catalyses the reaction an acyl phosphate + H2O = a carboxylate + phosphate + H(+). The protein is Acylphosphatase (acyP) of Bacillus subtilis (strain 168).